The sequence spans 396 residues: Elongation factor Tu (396 aa).

A tr-type G domain is found at 10–205 (KSHANIGTIG…AVDEYIPTPE (196 aa)). The tract at residues 19–26 (GHVDHGKT) is G1. Residue 19–26 (GHVDHGKT) coordinates GTP. Position 26 (T26) interacts with Mg(2+). Residues 61-65 (GITIS) are G2. A G3 region spans residues 82-85 (DCPG). Residues 82–86 (DCPGH) and 137–140 (NKCD) each bind GTP. The segment at 137–140 (NKCD) is G4. Residues 175 to 177 (SAL) form a G5 region.

The protein belongs to the TRAFAC class translation factor GTPase superfamily. Classic translation factor GTPase family. EF-Tu/EF-1A subfamily. Monomer.

It localises to the cytoplasm. The enzyme catalyses GTP + H2O = GDP + phosphate + H(+). Its function is as follows. GTP hydrolase that promotes the GTP-dependent binding of aminoacyl-tRNA to the A-site of ribosomes during protein biosynthesis. The sequence is that of Elongation factor Tu from Bacillus pumilus (strain SAFR-032).